Consider the following 837-residue polypeptide: Translation initiation factor IF-2 (837 aa).

The interval 94-253 (KRSPDEIEAE…QHGFQNPTGP (160 aa)) is disordered. The span at 95–148 (RSPDEIEAERQRELEEQRAAEEAERLKAEEAAARQRAEEEARKAEEAARAKAAE) shows a compositional bias: basic and acidic residues. Positions 149–171 (EAVSAQPAAAVEVAAAEPVAKPA) are enriched in low complexity. 2 stretches are compositionally biased toward basic and acidic residues: residues 172-188 (AAEE…PKRD) and 220-229 (STDEESDGYR). A compositionally biased stretch (basic residues) spans 230–244 (RGGRGGKSKLKKRNQ). Residues 337-506 (TRAPVVTVMG…LLQAEVLELK (170 aa)) form the tr-type G domain. Residues 346–353 (GHVDHGKT) are G1. GTP is bound at residue 346-353 (GHVDHGKT). The tract at residues 371 to 375 (GITQH) is G2. Residues 392-395 (DTPG) are G3. GTP contacts are provided by residues 392 to 396 (DTPGH) and 446 to 449 (NKID). The segment at 446–449 (NKID) is G4. Positions 482-484 (SAK) are G5.

The protein belongs to the TRAFAC class translation factor GTPase superfamily. Classic translation factor GTPase family. IF-2 subfamily.

Its subcellular location is the cytoplasm. Its function is as follows. One of the essential components for the initiation of protein synthesis. Protects formylmethionyl-tRNA from spontaneous hydrolysis and promotes its binding to the 30S ribosomal subunits. Also involved in the hydrolysis of GTP during the formation of the 70S ribosomal complex. In Pseudomonas paraeruginosa (strain DSM 24068 / PA7) (Pseudomonas aeruginosa (strain PA7)), this protein is Translation initiation factor IF-2.